Here is an 82-residue protein sequence, read N- to C-terminus: Small ribosomal subunit protein bS18 (82 aa).

Residues 1 to 20 form a disordered region; the sequence is MVDINQIPTRRPFHRRRKTC.

This sequence belongs to the bacterial ribosomal protein bS18 family. As to quaternary structure, part of the 30S ribosomal subunit. Forms a tight heterodimer with protein bS6.

Its function is as follows. Binds as a heterodimer with protein bS6 to the central domain of the 16S rRNA, where it helps stabilize the platform of the 30S subunit. This is Small ribosomal subunit protein bS18 from Brucella anthropi (strain ATCC 49188 / DSM 6882 / CCUG 24695 / JCM 21032 / LMG 3331 / NBRC 15819 / NCTC 12168 / Alc 37) (Ochrobactrum anthropi).